A 384-amino-acid polypeptide reads, in one-letter code: MDAPIKAPTALNTEKARALAVALAQIEKQFGKGTIMKLGAGEVIEDIQVVSTGSLGLDIALGVGGLPRGRVVEIYGPESSGKTTLTLQVIAEMQKIGGTCAFVDAEHALDIQYAQKLGVNLQELLISQPDTGEQALEIVDSLTRSGAVDLIVIDSVAALTPKAELEGEMGDSLPGLQARLMSQALRKLTATIKKANCMVIFINQIRMKIGVMFGSPETTTGGNALKFYASVRLDIRRIGSIKKGDEVIGNETRVKVVKNKVASPFKMAEFDILYGEGISRLGEVLDLGVANHVVEKAGAWYAYRGEKIGQGRDNSREFLKENPALAIEIENKVREALGIPLVQAAQGSAEPEKAAKPEKVEKADKPVKAVVDKTLAAPLAPVAS.

76-83 (GPESSGKT) is an ATP binding site. The segment at 346–365 (QGSAEPEKAAKPEKVEKADK) is disordered. Basic and acidic residues predominate over residues 350 to 365 (EPEKAAKPEKVEKADK).

Belongs to the RecA family.

The protein resides in the cytoplasm. Its function is as follows. Can catalyze the hydrolysis of ATP in the presence of single-stranded DNA, the ATP-dependent uptake of single-stranded DNA by duplex DNA, and the ATP-dependent hybridization of homologous single-stranded DNAs. It interacts with LexA causing its activation and leading to its autocatalytic cleavage. This chain is Protein RecA, found in Polaromonas naphthalenivorans (strain CJ2).